The following is a 270-amino-acid chain: Formamidopyrimidine-DNA glycosylase (270 aa).

Residue Pro-2 is the Schiff-base intermediate with DNA of the active site. Residue Glu-3 is the Proton donor of the active site. Lys-57 acts as the Proton donor; for beta-elimination activity in catalysis. His-90, Arg-109, and Lys-150 together coordinate DNA. Residues Gln-235–Lys-269 form an FPG-type zinc finger. The active-site Proton donor; for delta-elimination activity is the Arg-259.

The protein belongs to the FPG family. As to quaternary structure, monomer. Zn(2+) serves as cofactor.

It carries out the reaction Hydrolysis of DNA containing ring-opened 7-methylguanine residues, releasing 2,6-diamino-4-hydroxy-5-(N-methyl)formamidopyrimidine.. The enzyme catalyses 2'-deoxyribonucleotide-(2'-deoxyribose 5'-phosphate)-2'-deoxyribonucleotide-DNA = a 3'-end 2'-deoxyribonucleotide-(2,3-dehydro-2,3-deoxyribose 5'-phosphate)-DNA + a 5'-end 5'-phospho-2'-deoxyribonucleoside-DNA + H(+). Its function is as follows. Involved in base excision repair of DNA damaged by oxidation or by mutagenic agents. Acts as a DNA glycosylase that recognizes and removes damaged bases. Has a preference for oxidized purines, such as 7,8-dihydro-8-oxoguanine (8-oxoG). Has AP (apurinic/apyrimidinic) lyase activity and introduces nicks in the DNA strand. Cleaves the DNA backbone by beta-delta elimination to generate a single-strand break at the site of the removed base with both 3'- and 5'-phosphates. The sequence is that of Formamidopyrimidine-DNA glycosylase from Actinobacillus succinogenes (strain ATCC 55618 / DSM 22257 / CCUG 43843 / 130Z).